Here is a 108-residue protein sequence, read N- to C-terminus: DNA-directed RNA polymerase subunit omega (108 aa).

The protein belongs to the RNA polymerase subunit omega family. In terms of assembly, the RNAP catalytic core consists of 2 alpha, 1 beta, 1 beta' and 1 omega subunit. When a sigma factor is associated with the core the holoenzyme is formed, which can initiate transcription.

The enzyme catalyses RNA(n) + a ribonucleoside 5'-triphosphate = RNA(n+1) + diphosphate. Functionally, promotes RNA polymerase assembly. Latches the N- and C-terminal regions of the beta' subunit thereby facilitating its interaction with the beta and alpha subunits. The sequence is that of DNA-directed RNA polymerase subunit omega from Mycolicibacterium paratuberculosis (strain ATCC BAA-968 / K-10) (Mycobacterium paratuberculosis).